A 331-amino-acid chain; its full sequence is MQSKQAPDTEILVIGGGPAGLHAAFYAAWRGLSVRVLEARGEVGGQLLALYPDKVIYDVPGVPQVRAAELVAALCAQLGPLDVDLRTGEVARTLEPDGTGGWVIGTAGARHRARAVILAAGMGALLPREVRVPGADTHPDVRADLPDPAGFAGRRVLVVGGVPQATRAAVELLEAGATVTLTHRRAGFRGDPLTLARLETARQASQMRLLAPAVLSRLTPQGAELVVEGAPLAVRADTVLILNGYLPDLSPLQAWPLAWDGEYVPDGPSGQTVLPGVYVIGDLARSGGDFKLLSLAFAQAAVAANHAAHHVRPELKMRPGHSSERGGYPVR.

Residues E38, Q46, Y51, A91, L125, D282, and S323 each contribute to the FAD site.

The protein belongs to the ferredoxin--NADP reductase type 2 family. As to quaternary structure, homodimer. Requires FAD as cofactor.

The enzyme catalyses 2 reduced [2Fe-2S]-[ferredoxin] + NADP(+) + H(+) = 2 oxidized [2Fe-2S]-[ferredoxin] + NADPH. This chain is Ferredoxin--NADP reductase, found in Deinococcus geothermalis (strain DSM 11300 / CIP 105573 / AG-3a).